A 536-amino-acid chain; its full sequence is Indolin-2-one monooxygenase (536 aa).

A helical transmembrane segment spans residues glycine 18–isoleucine 34. Residue cysteine 480 participates in heme binding.

This sequence belongs to the cytochrome P450 family. Requires heme as cofactor.

Its subcellular location is the membrane. It carries out the reaction indolin-2-one + reduced [NADPH--hemoprotein reductase] + O2 = 3-hydroxyindolin-2-one + oxidized [NADPH--hemoprotein reductase] + H2O + H(+). It participates in secondary metabolite biosynthesis; 2,4-dihydroxy-1,4-benzoxazin-3-one biosynthesis; 2,4-dihydroxy-1,4-benzoxazin-3-one from indoleglycerol phosphate: step 3/5. Functionally, catalyzes the conversion of indolin-2-one to 3-hydroxyindolin-2-one. The polypeptide is Indolin-2-one monooxygenase (CYP71C2) (Zea mays (Maize)).